We begin with the raw amino-acid sequence, 1377 residues long: DNA-directed RNA polymerase subunit beta (1377 aa).

It belongs to the RNA polymerase beta chain family. As to quaternary structure, the RNAP catalytic core consists of 2 alpha, 1 beta, 1 beta' and 1 omega subunit. When a sigma factor is associated with the core the holoenzyme is formed, which can initiate transcription.

The catalysed reaction is RNA(n) + a ribonucleoside 5'-triphosphate = RNA(n+1) + diphosphate. Its function is as follows. DNA-dependent RNA polymerase catalyzes the transcription of DNA into RNA using the four ribonucleoside triphosphates as substrates. The sequence is that of DNA-directed RNA polymerase subunit beta from Azoarcus sp. (strain BH72).